Consider the following 1073-residue polypeptide: Serine/threonine-protein phosphatase 6 regulatory ankyrin repeat subunit C (1073 aa).

ANK repeat units follow at residues 7-36 (TDQP…NINV), 40-69 (ERRT…NVNA), 73-102 (VWLT…DVNA), 106-135 (YWQT…TVNV), 139-168 (TGRT…SLST), 172-201 (KDRQ…DVMC), 205-234 (KGYT…EIDE), 238-267 (FGNT…NVNQ), 271-301 (KGFT…DVNF), 305-334 (EGKS…EIDC), 338-367 (YGNT…DTAR), 371-400 (HDMF…LYSI), 422-451 (LGRT…DLRR), 455-484 (FGRT…SINE), 488-544 (KGCT…DPSL), 548-578 (QGYT…CLED), 583-612 (IPVS…NLDV), 616-645 (KGRT…SALV), 650-679 (RKWT…RADI), 686-715 (HGQT…TADA), 719-748 (RGRT…FVLC), 752-781 (KGRT…STDP), 789-818 (SGYS…FAYL), 821-851 (NPFT…KIVN), 856-885 (KGRT…EVDT), 889-919 (LGRT…NITV), 923-952 (NKNT…DLGL), and 959-988 (ALQM…TVLA).

In terms of assembly, protein phosphatase 6 (PP6) holoenzyme is proposed to be a heterotrimeric complex formed by the catalytic subunit, a SAPS domain-containing subunit (PP6R) and an ankyrin repeat-domain containing regulatory subunit (ARS).

Putative regulatory subunit of protein phosphatase 6 (PP6) that may be involved in the recognition of phosphoprotein substrates. This is Serine/threonine-protein phosphatase 6 regulatory ankyrin repeat subunit C (ANKRD52) from Gallus gallus (Chicken).